The following is a 152-amino-acid chain: Ribosome maturation factor RimP (152 aa).

Belongs to the RimP family.

The protein localises to the cytoplasm. In terms of biological role, required for maturation of 30S ribosomal subunits. The chain is Ribosome maturation factor RimP from Desulfitobacterium hafniense (strain Y51).